A 314-amino-acid polypeptide reads, in one-letter code: Aspartate carbamoyltransferase catalytic subunit (314 aa).

Positions 63 and 64 each coordinate carbamoyl phosphate. An L-aspartate-binding site is contributed by Lys91. Arg113, His143, and Gln146 together coordinate carbamoyl phosphate. The L-aspartate site is built by Arg176 and Arg228. Positions 269 and 270 each coordinate carbamoyl phosphate.

The protein belongs to the aspartate/ornithine carbamoyltransferase superfamily. ATCase family. As to quaternary structure, heterododecamer (2C3:3R2) of six catalytic PyrB chains organized as two trimers (C3), and six regulatory PyrI chains organized as three dimers (R2).

It catalyses the reaction carbamoyl phosphate + L-aspartate = N-carbamoyl-L-aspartate + phosphate + H(+). It functions in the pathway pyrimidine metabolism; UMP biosynthesis via de novo pathway; (S)-dihydroorotate from bicarbonate: step 2/3. Its function is as follows. Catalyzes the condensation of carbamoyl phosphate and aspartate to form carbamoyl aspartate and inorganic phosphate, the committed step in the de novo pyrimidine nucleotide biosynthesis pathway. The polypeptide is Aspartate carbamoyltransferase catalytic subunit (Cutibacterium acnes (strain DSM 16379 / KPA171202) (Propionibacterium acnes)).